The sequence spans 373 residues: Flagellar P-ring protein (373 aa).

An N-terminal signal peptide occupies residues 1–27; the sequence is MPSFSPTLLKLAAAALSALLLSGVAAS.

This sequence belongs to the FlgI family. In terms of assembly, the basal body constitutes a major portion of the flagellar organelle and consists of four rings (L,P,S, and M) mounted on a central rod.

It localises to the periplasm. It is found in the bacterial flagellum basal body. Assembles around the rod to form the L-ring and probably protects the motor/basal body from shearing forces during rotation. The protein is Flagellar P-ring protein of Rhodopseudomonas palustris (strain BisB5).